Reading from the N-terminus, the 232-residue chain is Cell surface superoxide dismutase [Cu-Zn] 4 (232 aa).

A signal peptide spans 1–15; that stretch reads MKYLSIISIVALALA. A glycan (N-linked (GlcNAc...) asparagine) is linked at N53. The Cu cation site is built by H75 and H77. N86 carries N-linked (GlcNAc...) asparagine glycosylation. Position 93 (H93) interacts with Cu cation. H93 lines the Zn(2+) pocket. A glycan (N-linked (GlcNAc...) asparagine) is linked at N98. D113 serves as a coordination point for Zn(2+). N-linked (GlcNAc...) asparagine glycosylation is present at N120. H153 lines the Cu cation pocket. 5 N-linked (GlcNAc...) asparagine glycosylation sites follow: N156, N164, N182, N193, and N196. Positions 174 to 208 are enriched in low complexity; it reads TASAATWSNSSSSSSSSSKNSTNGSSGSSTSASQG. Positions 174–211 are disordered; the sequence is TASAATWSNSSSSSSSSSKNSTNGSSGSSTSASQGSGA. S209 is lipidated: GPI-anchor amidated serine. The propeptide at 210-232 is removed in mature form; the sequence is GAGRAEISGFLAAGIAGVVAALI. Residue R213 coordinates substrate.

Belongs to the Cu-Zn superoxide dismutase family. Cu cation is required as a cofactor. Requires Zn(2+) as cofactor. Post-translationally, the GPI-anchor is attached to the protein in the endoplasmic reticulum and serves to target the protein to the cell surface. There, the glucosamine-inositol phospholipid moiety is cleaved off and the GPI-modified mannoprotein is covalently attached via its lipidless GPI glycan remnant to the 1,6-beta-glucan of the outer cell wall layer.

Its subcellular location is the secreted. The protein resides in the cell wall. It is found in the membrane. The catalysed reaction is 2 superoxide + 2 H(+) = H2O2 + O2. Superoxide dismutases serve to convert damaging superoxide radicals, a key form of ROS, to less damaging hydrogen peroxide that can be converted into water by catalase action. Degrades host-derived reactive oxygen species to escape innate immune surveillance. Involved in the occurrence of miconazole-tolerant persisters in biofilms. Persisters are cells that survive high doses of an antimicrobial agent. The sequence is that of Cell surface superoxide dismutase [Cu-Zn] 4 (SOD4) from Candida albicans (strain SC5314 / ATCC MYA-2876) (Yeast).